The primary structure comprises 66 residues: Large ribosomal subunit protein bL33 (66 aa).

Belongs to the bacterial ribosomal protein bL33 family.

The protein is Large ribosomal subunit protein bL33 of Wolbachia pipientis subsp. Culex pipiens (strain wPip).